Reading from the N-terminus, the 278-residue chain is Large ribosomal subunit protein uL2 (278 aa).

A disordered region spans residues 224-262; sequence VMNPVDHPLGGGEGRTSGGRHPVTPWGKPTKGFKTRKTR.

Belongs to the universal ribosomal protein uL2 family. Part of the 50S ribosomal subunit. Forms a bridge to the 30S subunit in the 70S ribosome.

In terms of biological role, one of the primary rRNA binding proteins. Required for association of the 30S and 50S subunits to form the 70S ribosome, for tRNA binding and peptide bond formation. It has been suggested to have peptidyltransferase activity; this is somewhat controversial. Makes several contacts with the 16S rRNA in the 70S ribosome. The sequence is that of Large ribosomal subunit protein uL2 from Leptospira biflexa serovar Patoc (strain Patoc 1 / Ames).